The primary structure comprises 232 residues: Protein Mis18-alpha (232 aa).

A phosphoserine mark is found at Ser36, Ser39, and Ser40. The Mis18 domain occupies 79–177 (PLVFLCSGCR…SVEAIESYVL (99 aa)). Residues Cys84, Cys87, Cys140, and Cys143 each contribute to the Zn(2+) site. A Glycyl lysine isopeptide (Lys-Gly) (interchain with G-Cter in SUMO2) cross-link involves residue Lys161. Ser232 is modified (phosphoserine).

The protein belongs to the mis18 family. In terms of assembly, homodimer, and heterodimer with OIP5/MIS18B. Identified in a complex containing MIS18A, OIP5/MIS18B, MIS18BP1, RBBP7 and RBBP4.

The protein resides in the nucleus. The protein localises to the chromosome. It is found in the centromere. In terms of biological role, required for recruitment of CENPA to centromeres and normal chromosome segregation during mitosis. The protein is Protein Mis18-alpha (MIS18A) of Pan troglodytes (Chimpanzee).